Consider the following 587-residue polypeptide: Putative adenylate cyclase 3 (587 aa).

Positions 12-127 (AILAADAVGY…DGVNVAARIE (116 aa)) constitute a Guanylate cyclase domain. 5 TPR repeats span residues 343 to 376 (LLVRSRQAILQFNALSSMEARRMLHRVLEIDPGM), 421 to 454 (PQGHYTLALALSWMRRLDEAEHAAERAIELDPNS), 455 to 488 (ANAYTALGTIRDFQGRHEEALALYTRAHRLDPQF), 490 to 522 (LSLHFQGRALLNLGRFDEAEVAFKRRLLLAPRS), and 524 to 556 (MTRFYLACLYGRTGRHEEARGYWREVLGVNPSF).

It belongs to the adenylyl cyclase class-3 family.

It carries out the reaction ATP = 3',5'-cyclic AMP + diphosphate. The protein is Putative adenylate cyclase 3 (cya3) of Rhizobium meliloti (strain 1021) (Ensifer meliloti).